Consider the following 363-residue polypeptide: UDP-3-O-acylglucosamine N-acyltransferase (363 aa).

The active-site Proton acceptor is the histidine 252.

It belongs to the transferase hexapeptide repeat family. LpxD subfamily. As to quaternary structure, homotrimer.

The enzyme catalyses a UDP-3-O-[(3R)-3-hydroxyacyl]-alpha-D-glucosamine + a (3R)-hydroxyacyl-[ACP] = a UDP-2-N,3-O-bis[(3R)-3-hydroxyacyl]-alpha-D-glucosamine + holo-[ACP] + H(+). It functions in the pathway bacterial outer membrane biogenesis; LPS lipid A biosynthesis. Functionally, catalyzes the N-acylation of UDP-3-O-acylglucosamine using 3-hydroxyacyl-ACP as the acyl donor. Is involved in the biosynthesis of lipid A, a phosphorylated glycolipid that anchors the lipopolysaccharide to the outer membrane of the cell. This Cupriavidus necator (strain ATCC 17699 / DSM 428 / KCTC 22496 / NCIMB 10442 / H16 / Stanier 337) (Ralstonia eutropha) protein is UDP-3-O-acylglucosamine N-acyltransferase.